A 239-amino-acid polypeptide reads, in one-letter code: Large ribosomal subunit protein uL1 (239 aa).

This sequence belongs to the universal ribosomal protein uL1 family. Part of the 50S ribosomal subunit.

Binds directly to 23S rRNA. The L1 stalk is quite mobile in the ribosome, and is involved in E site tRNA release. Its function is as follows. Protein L1 is also a translational repressor protein, it controls the translation of the L11 operon by binding to its mRNA. This is Large ribosomal subunit protein uL1 from Rickettsia canadensis (strain McKiel).